The following is a 390-amino-acid chain: MQVTTITMDDVQYPYRLGTDCLDGIVTRLGELGASRYLIVSDPRVAELYGQGLRERLAEQAGPAELITHASGEQNKGLPALHDLAEEALRRGADRQSIVVALGGGVTGNIAGLLAALLFRGIRLVHVPTTVVAMLDSVLSLKQAVNAGVGKNLVGTFYQPVEVLADTAMLRTLPVREVRSGMCEVVKNSLAIRPSMIDQLSAGLRPDGRYPDDTMHWIIYESLAAKAQVTAYDKYERGEGLILEYGHTVGHAVEHSSQGAVPHGAAVALGMIAAAQVSHRAGWASAELVDLHRELVAKTGVARRIPSDIPLSAVRHRLSFDNKRGYLPASADTYPMVLLESPGKVLRSEGTVLTAAPRDLVDAVVDELAEPPRPAAARTDDAATVLGGAG.

NAD(+)-binding positions include D42, 73 to 76 (EQNK), 105 to 109 (GVTGN), 129 to 130 (TT), 140 to 142 (SLK), and 151 to 152 (KN). Residue K142 is part of the active site. E184 contacts Co(2+). E244 is a catalytic residue. Co(2+) is bound by residues H247 and H263. A disordered region spans residues 371 to 390 (PPRPAAARTDDAATVLGGAG).

This sequence belongs to the sugar phosphate cyclases superfamily. DOI synthase family. NAD(+) serves as cofactor. Co(2+) is required as a cofactor.

It catalyses the reaction D-glucose 6-phosphate = 2-deoxy-L-scyllo-inosose + phosphate. It functions in the pathway metabolic intermediate biosynthesis; 2-deoxystreptamine biosynthesis; 2-deoxystreptamine from D-glucose 6-phosphate: step 1/4. The protein operates within antibiotic biosynthesis; kanamycin biosynthesis. In terms of biological role, catalyzes the intramolecular carbocycle formation from D-glucose-6-phosphate to 2-deoxy-scyllo-inosose (DOI). The chain is 2-deoxy-scyllo-inosose synthase (kanC) from Streptomyces kanamyceticus.